We begin with the raw amino-acid sequence, 731 residues long: Polyribonucleotide nucleotidyltransferase (731 aa).

2 residues coordinate Mg(2+): Asp-488 and Asp-494. One can recognise a KH domain in the interval 555-614 (PRIEVINIAVDKIRDVIGSGGKVIREIVEQTGAKINIEDDGTIKIASADAKTIEAAKRWI). Residues 624-692 (GAIYQGTVVK…ERGKVRLSMK (69 aa)) form the S1 motif domain. Positions 693–731 (AVDQKTGKEMTDDKSVKEEKCMDEKKQPENKRRRKKKEE) are disordered. Positions 694-722 (VDQKTGKEMTDDKSVKEEKCMDEKKQPEN) are enriched in basic and acidic residues.

The protein belongs to the polyribonucleotide nucleotidyltransferase family. The cofactor is Mg(2+).

Its subcellular location is the cytoplasm. The enzyme catalyses RNA(n+1) + phosphate = RNA(n) + a ribonucleoside 5'-diphosphate. In terms of biological role, involved in mRNA degradation. Catalyzes the phosphorolysis of single-stranded polyribonucleotides processively in the 3'- to 5'-direction. The chain is Polyribonucleotide nucleotidyltransferase from Bartonella tribocorum (strain CIP 105476 / IBS 506).